A 90-amino-acid chain; its full sequence is Small ribosomal subunit protein bS16 (90 aa).

Belongs to the bacterial ribosomal protein bS16 family.

This chain is Small ribosomal subunit protein bS16, found in Streptococcus pneumoniae serotype 19F (strain G54).